Consider the following 318-residue polypeptide: Decaprenyl-phosphate phosphoribosyltransferase (318 aa).

2 helical membrane passes run 33–53 (WIKN…GIEY) and 59–79 (AAKV…IYLI). 5-phospho-alpha-D-ribose 1-diphosphate-binding residues include Lys35 and Tyr77. Residues Asn80 and Asp84 each contribute to the Mg(2+) site. Lys94 contributes to the 5-phospho-alpha-D-ribose 1-diphosphate binding site. Transmembrane regions (helical) follow at residues 99 to 119 (IAAG…LAVA) and 121 to 141 (LVIS…YIAV). 5-phospho-alpha-D-ribose 1-diphosphate is bound by residues Lys150 and Arg167. 2 consecutive transmembrane segments (helical) span residues 153-173 (AVLD…AGGV) and 177-197 (IPLS…MAAG). A trans,octa-cis-decaprenyl phosphate-binding site is contributed by Lys198. Transmembrane regions (helical) follow at residues 225-245 (LRFV…LWAF), 262-282 (SWYA…AVDI), and 298-318 (RVLQ…IYFS).

This sequence belongs to the UbiA prenyltransferase family. DPPR synthase subfamily. Mg(2+) serves as cofactor.

It is found in the cell inner membrane. The enzyme catalyses trans,octa-cis-decaprenyl phosphate + 5-phospho-alpha-D-ribose 1-diphosphate + H(+) = trans,octa-cis-decaprenylphospho-beta-D-ribofuranose 5-phosphate + diphosphate. Its pathway is cell wall biogenesis; cell wall polysaccharide biosynthesis. Its function is as follows. Involved in the biosynthesis of decaprenylphosphoryl arabinose (DPA) a precursor for arabinan synthesis in mycobacterial cell wall biosynthesis. Catalyzes the transfer of a 5-phosphoribosyl residue from phosphoribose diphosphate (PRPP) to decaprenyl phosphate (DP) to form decaprenylphosphoryl-5-phosphoribose (DPPR). The chain is Decaprenyl-phosphate phosphoribosyltransferase from Mycolicibacterium smegmatis (strain ATCC 700084 / mc(2)155) (Mycobacterium smegmatis).